We begin with the raw amino-acid sequence, 95 residues long: CRISPR-associated endoribonuclease Cas2 1 (95 aa).

Residue D8 coordinates Mg(2+).

This sequence belongs to the CRISPR-associated endoribonuclease Cas2 protein family. Homodimer, forms a heterotetramer with a Cas1 homodimer. The cofactor is Mg(2+).

CRISPR (clustered regularly interspaced short palindromic repeat), is an adaptive immune system that provides protection against mobile genetic elements (viruses, transposable elements and conjugative plasmids). CRISPR clusters contain sequences complementary to antecedent mobile elements and target invading nucleic acids. CRISPR clusters are transcribed and processed into CRISPR RNA (crRNA). Functions as a ssRNA-specific endoribonuclease. Involved in the integration of spacer DNA into the CRISPR cassette. This Pyrobaculum aerophilum (strain ATCC 51768 / DSM 7523 / JCM 9630 / CIP 104966 / NBRC 100827 / IM2) protein is CRISPR-associated endoribonuclease Cas2 1.